Reading from the N-terminus, the 28-residue chain is M-ectatotoxin-Eb2c (28 aa).

As to expression, expressed by the venom gland.

Its subcellular location is the secreted. Functionally, antimicrobial peptide active against Gram-negative bacterium E.coli MH1 (MIC=3.5 uM) and P.aeruginosa PAO1 (MIC=10 uM) and against Gram-positive bacterium A.globiformis VKM Ac-1112 (MIC=1.25 uM). The protein is M-ectatotoxin-Eb2c of Ectatomma brunneum (Ant).